The primary structure comprises 110 residues: Large ribosomal subunit protein uL22 (110 aa).

The protein belongs to the universal ribosomal protein uL22 family. Part of the 50S ribosomal subunit.

Its function is as follows. This protein binds specifically to 23S rRNA; its binding is stimulated by other ribosomal proteins, e.g. L4, L17, and L20. It is important during the early stages of 50S assembly. It makes multiple contacts with different domains of the 23S rRNA in the assembled 50S subunit and ribosome. In terms of biological role, the globular domain of the protein is located near the polypeptide exit tunnel on the outside of the subunit, while an extended beta-hairpin is found that lines the wall of the exit tunnel in the center of the 70S ribosome. This Shewanella amazonensis (strain ATCC BAA-1098 / SB2B) protein is Large ribosomal subunit protein uL22.